The following is a 95-amino-acid chain: Large ribosomal subunit protein bL27 (95 aa).

The propeptide occupies 1-6 (MKLQLF). Residues 1-25 (MKLQLFAHKKGVGSSRNGRDSESKR) are disordered.

The protein belongs to the bacterial ribosomal protein bL27 family. Post-translationally, the N-terminus is cleaved by ribosomal processing cysteine protease Prp.

The sequence is that of Large ribosomal subunit protein bL27 from Thermoanaerobacter pseudethanolicus (strain ATCC 33223 / 39E) (Clostridium thermohydrosulfuricum).